The chain runs to 103 residues: N(4)-acetylcytidine amidohydrolase (103 aa).

Positions 6–101 (ITFFQRFQDD…QIQFYVIEFK (96 aa)) constitute an ASCH domain. Catalysis depends on Lys21, which acts as the Proton acceptor. The Nucleophile role is filled by Thr24. Glu74 functions as the Proton donor in the catalytic mechanism.

Belongs to the N(4)-acetylcytidine amidohydrolase family.

It catalyses the reaction N(4)-acetylcytidine + H2O = cytidine + acetate + H(+). The catalysed reaction is N(4)-acetyl-2'-deoxycytidine + H2O = 2'-deoxycytidine + acetate + H(+). The enzyme catalyses N(4)-acetylcytosine + H2O = cytosine + acetate + H(+). Catalyzes the hydrolysis of N(4)-acetylcytidine (ac4C). The protein is N(4)-acetylcytidine amidohydrolase (yqfB) of Escherichia coli (strain SMS-3-5 / SECEC).